The chain runs to 518 residues: Type II methyltransferase M.HindII (518 aa).

The protein belongs to the N(4)/N(6)-methyltransferase family.

It carries out the reaction a 2'-deoxyadenosine in DNA + S-adenosyl-L-methionine = an N(6)-methyl-2'-deoxyadenosine in DNA + S-adenosyl-L-homocysteine + H(+). Functionally, a gamma subtype methylase, recognizes the double-stranded sequence 5'-GTYRAC-3', methylates A-5 on both strands, and protects the DNA from cleavage by the HindII endonuclease. This chain is Type II methyltransferase M.HindII (hindIIM), found in Haemophilus influenzae (strain ATCC 51907 / DSM 11121 / KW20 / Rd).